Consider the following 1222-residue polypeptide: BOS complex subunit NOMO3 (1222 aa).

The N-terminal stretch at 1–31 is a signal peptide; the sequence is MLVGQGAGPLGPAVVTAAVVLLLSGVGPAHG. Residues 32–1155 lie on the Extracellular side of the membrane; it reads SEDIVVGCGG…NPTRKLPEQD (1124 aa). N-linked (GlcNAc...) asparagine glycosylation is found at Asn-50, Asn-218, and Asn-618. The helical transmembrane segment at 1156-1176 threads the bilayer; it reads IAQGSYIALPLTLLVLLAGYN. The Cytoplasmic portion of the chain corresponds to 1177-1222; that stretch reads HDKLIPLLLQLTSRLQGVGALGQAASDNSGPEDAKRQAKKQKTRRT. Positions 1198-1222 are disordered; sequence GQAASDNSGPEDAKRQAKKQKTRRT. Positions 1213–1222 are enriched in basic residues; sequence QAKKQKTRRT.

In terms of assembly, component of the back of Sec61 (BOS) complex, composed of NCLN/Nicalin, NOMO (NOMO1, NOMO2 or NOMO3) and TMEM147. The BOS complex is part of the multi-pass translocon (MPT) complex, composed of three subcomplexes, the GEL complex (composed of RAB5IF/OPTI and TMCO1), the BOS complex (composed of NCLN/Nicalin, NOMO and TMEM147) and the PAT complex (composed of WDR83OS/Asterix and CCDC47). The MPT complex associates with the SEC61 complex. Due to the strong similarity between NOMO1, NOMO2 and NOMO3, similar interaction pattern probably occur for the three gene copies.

It is found in the endoplasmic reticulum membrane. Component of the multi-pass translocon (MPT) complex that mediates insertion of multi-pass membrane proteins into the lipid bilayer of membranes. The MPT complex takes over after the SEC61 complex: following membrane insertion of the first few transmembrane segments of proteins by the SEC61 complex, the MPT complex occludes the lateral gate of the SEC61 complex to promote insertion of subsequent transmembrane regions. In Homo sapiens (Human), this protein is BOS complex subunit NOMO3 (NOMO3).